The chain runs to 445 residues: C4-dicarboxylate transport protein 2 (445 aa).

The next 8 helical transmembrane spans lie at 24–44 (ILYVQVLIAILIGIVVGWLFP), 62–82 (LIKMVIAPIIFCTVVSGIAHI), 96–116 (LVYFEIVSTFALLLGLIVGNL), 163–183 (GDILQVLLFAILFGFALMALG), 201–221 (FGVIAIVMKAAPVGAFGAMAF), 237–257 (LIALFYITAGLFVVIVLGLIA), 334–354 (ALGVDLSFSQQVTILIVAMLT), and 366–386 (FITLAATLSVVNPALVPGMAI).

It belongs to the dicarboxylate/amino acid:cation symporter (DAACS) (TC 2.A.23) family.

Its subcellular location is the cell inner membrane. Its function is as follows. Responsible for the transport of dicarboxylates such as succinate, fumarate, and malate from the periplasm across the membrane. The protein is C4-dicarboxylate transport protein 2 of Bradyrhizobium sp. (strain ORS 278).